A 93-amino-acid polypeptide reads, in one-letter code: Small ribosomal subunit protein uS19 (93 aa).

It belongs to the universal ribosomal protein uS19 family.

Protein S19 forms a complex with S13 that binds strongly to the 16S ribosomal RNA. The sequence is that of Small ribosomal subunit protein uS19 from Pseudarthrobacter chlorophenolicus (strain ATCC 700700 / DSM 12829 / CIP 107037 / JCM 12360 / KCTC 9906 / NCIMB 13794 / A6) (Arthrobacter chlorophenolicus).